A 398-amino-acid polypeptide reads, in one-letter code: tRNA-specific 2-thiouridylase MnmA (398 aa).

ATP-binding positions include 20–27 and L46; that span reads AMSGGVDS. Catalysis depends on C114, which acts as the Nucleophile. A disulfide bond links C114 and C210. Residue G138 participates in ATP binding. The interaction with tRNA stretch occupies residues 160-162; sequence RDQ. C210 functions as the Cysteine persulfide intermediate in the catalytic mechanism.

Belongs to the MnmA/TRMU family.

The protein resides in the cytoplasm. It catalyses the reaction S-sulfanyl-L-cysteinyl-[protein] + uridine(34) in tRNA + AH2 + ATP = 2-thiouridine(34) in tRNA + L-cysteinyl-[protein] + A + AMP + diphosphate + H(+). Its function is as follows. Catalyzes the 2-thiolation of uridine at the wobble position (U34) of tRNA, leading to the formation of s(2)U34. In Brucella canis (strain ATCC 23365 / NCTC 10854 / RM-666), this protein is tRNA-specific 2-thiouridylase MnmA.